The chain runs to 789 residues: Subtilisin-like protease Glyma18g48580 (789 aa).

The N-terminal stretch at 1–27 (MGSSIFCLHLILSSFFLFTFLLAAVNG) is a signal peptide. Residues 32-116 (YIVYMGAHSH…VFLSKEHKLH (85 aa)) form the Inhibitor I9 domain. The Peptidase S8 domain maps to 120-644 (SWEFLGLHRR…SGHVRPDLAI (525 aa)). Catalysis depends on charge relay system residues D150 and H224. Positions 401–489 (TFRDAQLCRR…RPHGVKTTAI (89 aa)) constitute a PA domain. The segment at 468–499 (STVNTPPRRAKSRPHGVKTTAIGDEDDPLKTG) is disordered. Residue S576 is the Charge relay system of the active site.

The protein belongs to the peptidase S8 family. Expressed in roots, stems, flowers and young leaves. Barely detectable in matures leaves.

It is found in the secreted. Functionally, produces a rapid alkalinization of the cellular media and the induction of defense-related genes, including chitinase 1b, chalcone synthase and CYP93A1. The receptor for GmSubPep is probably different from the receptor(s) for GmPep890 and GmPep914. In Glycine max (Soybean), this protein is Subtilisin-like protease Glyma18g48580.